The sequence spans 421 residues: uncharacterized protein (421 aa).

The TRAM domain occupies D14 to Q72. Residues Q250, Y286, E308, and D349 each contribute to the S-adenosyl-L-methionine site. The active-site Nucleophile is C376.

This sequence belongs to the class I-like SAM-binding methyltransferase superfamily. RNA M5U methyltransferase family.

This is an uncharacterized protein from Corynebacterium efficiens (strain DSM 44549 / YS-314 / AJ 12310 / JCM 11189 / NBRC 100395).